Reading from the N-terminus, the 158-residue chain is Endoribonuclease YbeY (158 aa).

Positions 118, 122, and 128 each coordinate Zn(2+).

This sequence belongs to the endoribonuclease YbeY family. Requires Zn(2+) as cofactor.

It is found in the cytoplasm. Single strand-specific metallo-endoribonuclease involved in late-stage 70S ribosome quality control and in maturation of the 3' terminus of the 16S rRNA. In Bartonella bacilliformis (strain ATCC 35685 / KC583 / Herrer 020/F12,63), this protein is Endoribonuclease YbeY.